The following is a 268-amino-acid chain: Receptor expression-enhancing protein 2 (268 aa).

The next 2 membrane-spanning stretches (helical) occupy residues 1–21 (MVSW…YPAY) and 35–55 (YVKW…ETIT). A disordered region spans residues 170–268 (GDDTHTAATL…TTANNVAESP (99 aa)). The segment covering 180-196 (PRAKTATRTVRATPVPA) has biased composition (low complexity). A compositionally biased stretch (basic and acidic residues) spans 199–216 (ESQHSSRSDDQSDSRTEH). Residues 228 to 248 (RIAITRAAKKPAAAKTEQTTK) are compositionally biased toward low complexity. Residues 249–258 (TVKKAPKKKP) are compositionally biased toward basic residues.

The protein belongs to the DP1 family. In terms of assembly, interacts with odorant receptor proteins.

The protein localises to the membrane. In terms of biological role, may enhance the cell surface expression of odorant receptors. In Danio rerio (Zebrafish), this protein is Receptor expression-enhancing protein 2 (reep2).